The primary structure comprises 170 residues: Fibroblast growth factor 2 (170 aa).

A disordered region spans residues V1–A21. Omega-N-methylarginine; alternate occurs at positions 4, 6, and 8. 3 positions are modified to symmetric dimethylarginine; alternate: R4, R6, and R8. A compositionally biased stretch (low complexity) spans G9–A21. N51 lines the heparin pocket. Y97 bears the Phosphotyrosine; by TEC mark. K110 is covalently cross-linked (Glycyl lysine isopeptide (Lys-Gly) (interchain with G-Cter in SUMO1)). Residues K143 to K159 are heparin-binding.

The protein belongs to the heparin-binding growth factors family. Monomer. Homodimer. Interacts with FGFR1, FGFR2, FGFR3 and FGFR4. Affinity between fibroblast growth factors (FGFs) and their receptors is increased by heparan sulfate glycosaminoglycans that function as coreceptors. Interacts with CSPG4, FGFBP1 and TEC. Found in a complex with FGFBP1, FGF1 and FGF2. Interacts with FGFBP3. Interacts with integrin ITGAV:ITGB3; the interaction is required for FGF2 signaling. Interacts with SNORC (via the extracellular domain). Interacts with glypican GPC3. Post-translationally, the N-terminus of isoform 2 is blocked. In terms of processing, phosphorylation at Tyr-97 regulates FGF2 unconventional secretion.

The protein localises to the secreted. Its subcellular location is the nucleus. Functionally, acts as a ligand for FGFR1, FGFR2, FGFR3 and FGFR4. Also acts as an integrin ligand which is required for FGF2 signaling. Binds to integrin ITGAV:ITGB3. Plays an important role in the regulation of cell survival, cell division, cell differentiation and cell migration. Functions as a potent mitogen in vitro. Can induce angiogenesis. Mediates phosphorylation of ERK1/2 and thereby promotes retinal lens fiber differentiation. This is Fibroblast growth factor 2 (FGF2) from Cavia porcellus (Guinea pig).